The following is a 212-amino-acid chain: Cyclin-P4-1 (212 aa).

This sequence belongs to the cyclin family. Cyclin U/P subfamily.

This chain is Cyclin-P4-1 (CYCP4-1), found in Oryza sativa subsp. japonica (Rice).